Consider the following 124-residue polypeptide: SPbeta prophage-derived uncharacterized protein YoqO (124 aa).

Helical transmembrane passes span 54–74 (LVVICLTFFVLALGIHKLLSF) and 88–108 (VIFILQITLIIGSVAIAISIM).

It localises to the cell membrane. This chain is SPbeta prophage-derived uncharacterized protein YoqO (yoqO), found in Bacillus subtilis (strain 168).